A 116-amino-acid polypeptide reads, in one-letter code: Cysteine proteinase inhibitor 1 (116 aa).

The first 26 residues, 1-26 (MVPKPLSLLLFLLLALSAAVVGGRKL), serve as a signal peptide directing secretion. The Cystatin domain occupies 30-89 (GGWRPIESLNSAEVQDVAQFAVSEHNKQANDELQYQSVVRGYTQVVAGTNYRLVIAAKDG). Residues 73–77 (QVVAG) carry the Secondary area of contact motif. Asn109 carries N-linked (GlcNAc...) asparagine glycosylation.

The protein belongs to the cystatin family. Phytocystatin subfamily. Glycosylated.

Its subcellular location is the secreted. In terms of biological role, specific inhibitor of papain family cysteine proteinases. Inhibits papain, chymopapain, bromelain, ficin, human cathepsins B, H and L, actinidain and house dustmite endopeptidase 1, but does not inhibit human bleomycin hydrolase. Inhibits papain with an IC(50) of 2.47 nM. Does not inhibit cysteine proteinases belonging to other families including clostripain, streptopain and calpain. The sequence is that of Cysteine proteinase inhibitor 1 from Actinidia deliciosa (Kiwi).